Here is a 643-residue protein sequence, read N- to C-terminus: Threonine--tRNA ligase (643 aa).

In terms of domain architecture, TGS spans 1–61 (MPIITLPDGS…TEDSKLEIIT (61 aa)). The interval 243-534 (DHRKIGKALD…ITEEYAGFFP (292 aa)) is catalytic. Residues C334, H385, and H511 each contribute to the Zn(2+) site.

Belongs to the class-II aminoacyl-tRNA synthetase family. As to quaternary structure, homodimer. Requires Zn(2+) as cofactor.

The protein localises to the cytoplasm. The catalysed reaction is tRNA(Thr) + L-threonine + ATP = L-threonyl-tRNA(Thr) + AMP + diphosphate + H(+). Functionally, catalyzes the attachment of threonine to tRNA(Thr) in a two-step reaction: L-threonine is first activated by ATP to form Thr-AMP and then transferred to the acceptor end of tRNA(Thr). Also edits incorrectly charged L-seryl-tRNA(Thr). This chain is Threonine--tRNA ligase, found in Pasteurella multocida (strain Pm70).